A 503-amino-acid chain; its full sequence is Na(+)-translocating NADH-quinone reductase subunit B (503 aa).

4 helical membrane passes run 55 to 75 (MILV…NSGV), 120 to 142 (IFLP…FAVI), 161 to 181 (TLPP…GVVV), and 186 to 206 (FGGT…FLFF). Threonine 248 is modified (FMN phosphoryl threonine). 5 helical membrane passes run 361–381 (TSTF…IASW), 387–407 (FGIG…LIVG), 417–437 (FFIP…LVFM), 452–472 (WIYG…NPAY), and 475–495 (GVML…YFAV).

Belongs to the NqrB/RnfD family. As to quaternary structure, composed of six subunits; NqrA, NqrB, NqrC, NqrD, NqrE and NqrF. FMN is required as a cofactor.

Its subcellular location is the cell inner membrane. The catalysed reaction is a ubiquinone + n Na(+)(in) + NADH + H(+) = a ubiquinol + n Na(+)(out) + NAD(+). In terms of biological role, NQR complex catalyzes the reduction of ubiquinone-1 to ubiquinol by two successive reactions, coupled with the transport of Na(+) ions from the cytoplasm to the periplasm. NqrA to NqrE are probably involved in the second step, the conversion of ubisemiquinone to ubiquinol. The chain is Na(+)-translocating NADH-quinone reductase subunit B from Chlamydia felis (strain Fe/C-56) (Chlamydophila felis).